Consider the following 242-residue polypeptide: 4-hydroxy-tetrahydrodipicolinate reductase (242 aa).

Residues 8-13 (GSNGRM), 75-77 (GTT), and 99-102 (ATNM) each bind NAD(+). Histidine 131 serves as the catalytic Proton donor/acceptor. Histidine 132 is a binding site for (S)-2,3,4,5-tetrahydrodipicolinate. Lysine 135 acts as the Proton donor in catalysis. A (S)-2,3,4,5-tetrahydrodipicolinate-binding site is contributed by 141–142 (GT).

Belongs to the DapB family.

The protein localises to the cytoplasm. It carries out the reaction (S)-2,3,4,5-tetrahydrodipicolinate + NAD(+) + H2O = (2S,4S)-4-hydroxy-2,3,4,5-tetrahydrodipicolinate + NADH + H(+). It catalyses the reaction (S)-2,3,4,5-tetrahydrodipicolinate + NADP(+) + H2O = (2S,4S)-4-hydroxy-2,3,4,5-tetrahydrodipicolinate + NADPH + H(+). It functions in the pathway amino-acid biosynthesis; L-lysine biosynthesis via DAP pathway; (S)-tetrahydrodipicolinate from L-aspartate: step 4/4. Functionally, catalyzes the conversion of 4-hydroxy-tetrahydrodipicolinate (HTPA) to tetrahydrodipicolinate. In Campylobacter lari (strain RM2100 / D67 / ATCC BAA-1060), this protein is 4-hydroxy-tetrahydrodipicolinate reductase.